Consider the following 443-residue polypeptide: Enolase B (443 aa).

Residues histidine 156 and glutamate 165 each contribute to the substrate site. The Proton donor role is filled by glutamate 208. Mg(2+)-binding residues include aspartate 243, glutamate 296, and aspartate 323. 2 residues coordinate substrate: glutamate 296 and aspartate 323. The active-site Proton acceptor is the lysine 348. Substrate contacts are provided by residues 375 to 378 (SHRS) and lysine 399.

This sequence belongs to the enolase family. In terms of assembly, homodimer. The cofactor is Mg(2+).

It localises to the cytoplasm. It carries out the reaction (2R)-2-phosphoglycerate = phosphoenolpyruvate + H2O. Its pathway is carbohydrate degradation; glycolysis; pyruvate from D-glyceraldehyde 3-phosphate: step 4/5. The sequence is that of Enolase B (enoB) from Dictyostelium discoideum (Social amoeba).